The sequence spans 135 residues: Histone H3 type 1 (135 aa).

The disordered stretch occupies residues 1–40 (MARTKQTARKSTGGKAPRKQLATKAARKTPATGGVKKPHR). An N6-methyllysine modification is found at K5. K10 carries the N6-acetyllysine; alternate modification. The residue at position 10 (K10) is an N6-methyllysine; alternate. Position 11 is a phosphoserine (S11). Phosphothreonine is present on T12. K15, K19, and K24 each carry N6-acetyllysine. N6-acetyllysine; alternate is present on K28. K28 carries the post-translational modification N6-methyllysine; alternate. N6-methyllysine is present on residues K36 and K37.

It belongs to the histone H3 family. The nucleosome is a histone octamer containing two molecules each of H2A, H2B, H3 and H4 assembled in one H3-H4 heterotetramer and two H2A-H2B heterodimers. The octamer wraps approximately 147 bp of DNA. In terms of processing, acetylation is generally linked to gene activation. Acetylated to form H3K9ac (11%), H3K14ac (17%), H3K18ac (11%), H3K23ac (16%) and H3K27ac (7%). H3K4, H3K35 and H3K36 are not acetylated. H3K4me prevents acetylation. 32% of the histone H3 are acetylated with, on average, 2.4 acetyl-Lys. They are all continuously deacatylated and re-acetylated with a half-life of approximately 2 minutes. Post-translationally, monomethylated to form H3K4me1 (81%), H3K9me1 (16%), H3K27me1 (25%), H3K35me1 (25%) and H3K36me1 (5%). No methylation at H3K14, H3K18 and H3K23. Methylated by a protein complex that includes Mut11. Set1 methylates specifically H3K4. H3K4me1 is associated with silenced euchromatin. Set3 forms H3K9me1, while H3K9me2 is undetected. H3K9me1 is specifically associated with silent, multi-copy transgenes. No phosphorylation detected.

The protein resides in the nucleus. It localises to the chromosome. In terms of biological role, core component of nucleosome. Nucleosomes wrap and compact DNA into chromatin, limiting DNA accessibility to the cellular machineries which require DNA as a template. Histones thereby play a central role in transcription regulation, DNA repair, DNA replication and chromosomal stability. DNA accessibility is regulated via a complex set of post-translational modifications of histones, also called histone code, and nucleosome remodeling. This Chlamydomonas reinhardtii (Chlamydomonas smithii) protein is Histone H3 type 1 (ch3-I).